The chain runs to 310 residues: Protoheme IX farnesyltransferase 2 (310 aa).

9 helical membrane passes run 25-45, 49-69, 98-118, 121-141, 145-165, 176-196, 222-242, 245-265, and 277-297; these read PGIIFGNLISVAGGFLLAAKG, LVLMLASLVGLSLVVASGCAI, HVLLFGIALGVLGFGILALFT, LALLFAAIGYVVYVGIYSLYM, SVYGTLVGSFSGAVPPVVGYC, VILLLMFSLWQMPHSYAIAIF, IVLYIAVFALVSTMLPLAGYT, AFMAVTCATSLWWLTMALKGY, and QVFGFSIITITALSVTMALDF.

Belongs to the UbiA prenyltransferase family. Protoheme IX farnesyltransferase subfamily.

It localises to the cell inner membrane. It catalyses the reaction heme b + (2E,6E)-farnesyl diphosphate + H2O = Fe(II)-heme o + diphosphate. It functions in the pathway porphyrin-containing compound metabolism; heme O biosynthesis; heme O from protoheme: step 1/1. Its function is as follows. Converts heme B (protoheme IX) to heme O by substitution of the vinyl group on carbon 2 of heme B porphyrin ring with a hydroxyethyl farnesyl side group. The protein is Protoheme IX farnesyltransferase 2 of Shewanella sp. (strain MR-4).